The chain runs to 72 residues: UPF0270 protein YheU (72 aa).

Belongs to the UPF0270 family.

This is UPF0270 protein YheU from Escherichia coli (strain ATCC 8739 / DSM 1576 / NBRC 3972 / NCIMB 8545 / WDCM 00012 / Crooks).